The chain runs to 277 residues: 2-dehydro-3-deoxyphosphooctonate aldolase (277 aa).

This sequence belongs to the KdsA family.

It is found in the cytoplasm. It carries out the reaction D-arabinose 5-phosphate + phosphoenolpyruvate + H2O = 3-deoxy-alpha-D-manno-2-octulosonate-8-phosphate + phosphate. It functions in the pathway carbohydrate biosynthesis; 3-deoxy-D-manno-octulosonate biosynthesis; 3-deoxy-D-manno-octulosonate from D-ribulose 5-phosphate: step 2/3. It participates in bacterial outer membrane biogenesis; lipopolysaccharide biosynthesis. The chain is 2-dehydro-3-deoxyphosphooctonate aldolase from Hydrogenovibrio crunogenus (strain DSM 25203 / XCL-2) (Thiomicrospira crunogena).